The primary structure comprises 740 residues: Ion-translocating oxidoreductase complex subunit C (740 aa).

2 consecutive 4Fe-4S ferredoxin-type domains span residues 369 to 397 (GEPQ…QQLY) and 407 to 436 (KATT…VQYF). [4Fe-4S] cluster-binding residues include Cys377, Cys380, Cys383, Cys387, Cys416, Cys419, Cys422, and Cys426. The segment at 598 to 716 (AKARKLEQQQ…EPEEQVDPRK (119 aa)) is disordered.

Belongs to the 4Fe4S bacterial-type ferredoxin family. RnfC subfamily. The complex is composed of six subunits: RsxA, RsxB, RsxC, RsxD, RsxE and RsxG. The cofactor is [4Fe-4S] cluster.

The protein resides in the cell inner membrane. Part of a membrane-bound complex that couples electron transfer with translocation of ions across the membrane. Required to maintain the reduced state of SoxR. The polypeptide is Ion-translocating oxidoreductase complex subunit C (Shigella flexneri serotype 5b (strain 8401)).